The primary structure comprises 611 residues: MARDQFYGHNNHHHQEQQHQMINQIQGFDETNQNPTDHHHYNHQIFGSNSNMGMMIDFSKQQQIRMTSGSDHHHHHHQTSGGTDQNQLLEDSSSAMRLCNVNNDFPSEVNDERPPQRPSQGLSLSLSSSNPTSISLQSFELRPQQQQQQGYSGNKSTQHQNLQHTQMMMMMMNSHHQNNNNNNHQHHNHHQFQIGSSKYLSPAQELLSEFCSLGVKESDEEVMMMKHKKKQKGKQQEEWDTSHHSNNDQHDQSATTSSKKHVPPLHSLEFMELQKRKAKLLSMLEELKRRYGHYREQMRVAAAAFEAAVGLGGAEIYTALASRAMSRHFRCLKDGLVGQIQATSQALGEREEDNRAVSIAARGETPRLRLLDQALRQQKSYRQMTLVDAHPWRPQRGLPERAVTTLRAWLFEHFLHPYPSDVDKHILARQTGLSRSQVSNWFINARVRLWKPMIEEMYCEETRSEQMEITNPMMIDTKPDPDQLIRVEPESLSSIVTNPTSKSGHNSTHGTMSLGSTFDFSLYGNQAVTYAGEGGPRGDVSLTLGLQRNDGNGGVSLALSPVTAQGGQLFYGRDHIEEGPVQYSASMLDDDQVQNLPYRNLMGAQLLHDIV.

Disordered regions lie at residues 63 to 87 (QIRM…DQNQ), 101 to 133 (VNND…NPTS), 141 to 160 (LRPQ…TQHQ), and 174 to 195 (SHHQ…FQIG). Positions 118–133 (PSQGLSLSLSSSNPTS) are enriched in low complexity. Over residues 174–183 (SHHQNNNNNN) the composition is skewed to low complexity. The interval 197 to 213 (SKYLSPAQELLSEFCSL) is SR/KY domain. The interval 225-263 (MKHKKKQKGKQQEEWDTSHHSNNDQHDQSATTSSKKHVP) is disordered. The span at 234-251 (KQQEEWDTSHHSNNDQHD) shows a compositional bias: basic and acidic residues. Residues 269-340 (EFMELQKRKA…CLKDGLVGQI (72 aa)) are BELL domain. The Bipartite nuclear localization signature appears at 275–290 (KRKAKLLSMLEELKRR). A DNA-binding region (homeobox) is located at residues 391-453 (PWRPQRGLPE…NARVRLWKPM (63 aa)).

This sequence belongs to the TALE/BELL homeobox family. May form heterodimeric complexes with TALE/KNOX proteins STM, KNAT1/BP, KNAT2 and KNAT5. Interacts with AG-SEP1 and AG-SEP3 dimers. Interacts with KNATM, isoform KNATM-B. Interacts with BZIP30. In terms of tissue distribution, expressed in both floral and vegetative tissues.

It is found in the nucleus. Functionally, plays a major role in ovule patterning and in determination of integument identity via its interaction with MADS-box factors. Formation of complex with AG-SEP dimers negatively regulates the carpel identity process and favors the maintenance of ovule identity. BEL1-STM complex maintains the indeterminacy of the inflorescence meristem. Required, with SPL, for cytokinin-induced PIN1 expression in ovules. The sequence is that of Homeobox protein BEL1 homolog (BEL1) from Arabidopsis thaliana (Mouse-ear cress).